The sequence spans 790 residues: N-methylputrescine oxidase 1, peroxisomal (790 aa).

Positions 1 to 23 (MATTKQKVTAPSPSPSSSTASCC) are disordered. The segment covering 9–23 (TAPSPSPSSSTASCC) has biased composition (low complexity). Residue 423–434 (AFDAGEDGLGKN) participates in substrate binding. D425 functions as the Proton acceptor in the catalytic mechanism. C444 and C470 form a disulfide bridge. 506–511 (VANYEY) contacts substrate. The Schiff-base intermediate with substrate; via topaquinone role is filled by Y509. Y509 is modified (2',4',5'-topaquinone). Positions 559 and 561 each coordinate Cu cation. Residues D714 and I715 each contribute to the Mn(2+) site. A Cu cation-binding site is contributed by H725.

The protein belongs to the copper/topaquinone oxidase family. As to quaternary structure, homodimer. Requires Cu cation as cofactor. It depends on Zn(2+) as a cofactor. L-topaquinone is required as a cofactor. Topaquinone (TPQ) is generated by copper-dependent autoxidation of a specific tyrosyl residue. As to expression, mainly expressed in roots, and, to a lower extent, in stems.

Its subcellular location is the peroxisome. It catalyses the reaction a primary methyl amine + O2 + H2O = an aldehyde + H2O2 + NH4(+). It carries out the reaction N-methylputrescine + O2 + H2O = 4-methylaminobutanal + H2O2 + NH4(+). Its pathway is alkaloid biosynthesis; nicotine biosynthesis. Involved in the biosynthesis of pyridine alkaloid natural products, leading mainly to the production of anabasine, anatabine, nicotine and nornicotine, effective deterrents against herbivores with antiparasitic and pesticide properties (neurotoxins); nornicotine serves as the precursor in the synthesis of the carcinogen compound N'-nitrosonornicotine (NNN). Amine oxidase which mediates the deamination of N-methylputrescine to produce 4-methylaminobutanal. Oxidizes preferentially N-methylated amines. The protein is N-methylputrescine oxidase 1, peroxisomal of Nicotiana tabacum (Common tobacco).